A 300-amino-acid polypeptide reads, in one-letter code: Meiosis-specific cyclin crs1 (300 aa).

One can recognise a Cyclin N-terminal domain in the interval 61–183 (IIEQEKKGLT…VLALLNFDIY (123 aa)).

It belongs to the cyclin family. Cyclin AB subfamily.

The protein resides in the cytoplasm. It is found in the nucleus. Functionally, has a role in meiotic chromosome segregation. The polypeptide is Meiosis-specific cyclin crs1 (crs1) (Schizosaccharomyces pombe (strain 972 / ATCC 24843) (Fission yeast)).